Here is a 200-residue protein sequence, read N- to C-terminus: uncharacterized protein (200 aa).

Residues 1-21 (MSNSAQRDARNSRDESARASD) are disordered. A compositionally biased stretch (basic and acidic residues) spans 7 to 21 (RDARNSRDESARASD).

This is an uncharacterized protein from Mycobacterium tuberculosis (strain CDC 1551 / Oshkosh).